Consider the following 86-residue polypeptide: Small ribosomal subunit protein uS15 (86 aa).

This sequence belongs to the universal ribosomal protein uS15 family. Part of the 30S ribosomal subunit. Forms a bridge to the 50S subunit in the 70S ribosome, contacting the 23S rRNA.

One of the primary rRNA binding proteins, it binds directly to 16S rRNA where it helps nucleate assembly of the platform of the 30S subunit by binding and bridging several RNA helices of the 16S rRNA. In terms of biological role, forms an intersubunit bridge (bridge B4) with the 23S rRNA of the 50S subunit in the ribosome. The polypeptide is Small ribosomal subunit protein uS15 (Vesicomyosocius okutanii subsp. Calyptogena okutanii (strain HA)).